We begin with the raw amino-acid sequence, 563 residues long: Choline transporter (563 aa).

A disordered region spans residues Met-1 to Lys-25. The Extracellular segment spans residues Met-1–Ser-57. 2 N-linked (GlcNAc...) asparagine glycosylation sites follow: Asn-7 and Asn-20. Residues Ser-22 and Ser-42 each carry the phosphoserine modification. The helical transmembrane segment at Phe-58 to Ser-78 threads the bilayer. At Thr-79–Ser-87 the chain is on the cytoplasmic side. The chain crosses the membrane as a helical span at residues Gly-88–Gly-108. Topologically, residues Thr-109 to Arg-182 are extracellular. The helical transmembrane segment at Trp-183–Gly-203 threads the bilayer. Residues Lys-204–Ser-205 lie on the Cytoplasmic side of the membrane. Residues Leu-206–Ile-226 traverse the membrane as a helical segment. The Extracellular segment spans residues Thr-227–Gly-255. N-linked (GlcNAc...) asparagine glycosylation occurs at Asn-248. Residues Gly-256–Ala-276 traverse the membrane as a helical segment. The Cytoplasmic segment spans residues Thr-277 to Ala-293. The chain crosses the membrane as a helical span at residues Ile-294–Phe-314. Residues Ser-315 to Lys-342 lie on the Extracellular side of the membrane. N-linked (GlcNAc...) asparagine glycosylation is present at Asn-341. The helical transmembrane segment at Ser-343–Cys-363 threads the bilayer. Topologically, residues His-364 to Asn-398 are cytoplasmic. A helical transmembrane segment spans residues Ala-399–Ser-417. Over Ser-418 to Thr-426 the chain is Extracellular. The helical transmembrane segment at Gly-427–Ala-445 threads the bilayer. Residues Lys-446 to Asn-465 lie on the Cytoplasmic side of the membrane. The chain crosses the membrane as a helical span at residues Ile-466–Pro-486. Over Val-487–Asn-491 the chain is Extracellular. A helical transmembrane segment spans residues Met-492 to Tyr-512. The Cytoplasmic segment spans residues Lys-513–Lys-563.

Belongs to the amino acid-polyamine-organocation (APC) superfamily. Amino acid/choline transporter (ACT) (TC 2.A.3.4) family.

It is found in the membrane. It carries out the reaction choline(out) = choline(in). It catalyses the reaction ethanolamine(in) = ethanolamine(out). Its function is as follows. Sole choline transporter in yeast. Also transports ethanolamine. The sequence is that of Choline transporter (HNM1) from Saccharomyces cerevisiae (strain ATCC 204508 / S288c) (Baker's yeast).